The primary structure comprises 331 residues: 4-hydroxy-3-methylbut-2-enyl diphosphate reductase (331 aa).

Cysteine 12 contributes to the [4Fe-4S] cluster binding site. Positions 43 and 81 each coordinate (2E)-4-hydroxy-3-methylbut-2-enyl diphosphate. Dimethylallyl diphosphate is bound by residues histidine 43 and histidine 81. Residues histidine 43 and histidine 81 each contribute to the isopentenyl diphosphate site. Cysteine 103 serves as a coordination point for [4Fe-4S] cluster. Histidine 131 provides a ligand contact to (2E)-4-hydroxy-3-methylbut-2-enyl diphosphate. Histidine 131 lines the dimethylallyl diphosphate pocket. Histidine 131 is a binding site for isopentenyl diphosphate. Glutamate 133 serves as the catalytic Proton donor. Threonine 170 is a (2E)-4-hydroxy-3-methylbut-2-enyl diphosphate binding site. Cysteine 198 provides a ligand contact to [4Fe-4S] cluster. Residues serine 226, asparagine 228, and serine 271 each coordinate (2E)-4-hydroxy-3-methylbut-2-enyl diphosphate. Dimethylallyl diphosphate is bound by residues serine 226, asparagine 228, and serine 271. Residues serine 226, asparagine 228, and serine 271 each coordinate isopentenyl diphosphate.

This sequence belongs to the IspH family. It depends on [4Fe-4S] cluster as a cofactor.

It catalyses the reaction isopentenyl diphosphate + 2 oxidized [2Fe-2S]-[ferredoxin] + H2O = (2E)-4-hydroxy-3-methylbut-2-enyl diphosphate + 2 reduced [2Fe-2S]-[ferredoxin] + 2 H(+). The catalysed reaction is dimethylallyl diphosphate + 2 oxidized [2Fe-2S]-[ferredoxin] + H2O = (2E)-4-hydroxy-3-methylbut-2-enyl diphosphate + 2 reduced [2Fe-2S]-[ferredoxin] + 2 H(+). Its pathway is isoprenoid biosynthesis; dimethylallyl diphosphate biosynthesis; dimethylallyl diphosphate from (2E)-4-hydroxy-3-methylbutenyl diphosphate: step 1/1. It functions in the pathway isoprenoid biosynthesis; isopentenyl diphosphate biosynthesis via DXP pathway; isopentenyl diphosphate from 1-deoxy-D-xylulose 5-phosphate: step 6/6. In terms of biological role, catalyzes the conversion of 1-hydroxy-2-methyl-2-(E)-butenyl 4-diphosphate (HMBPP) into a mixture of isopentenyl diphosphate (IPP) and dimethylallyl diphosphate (DMAPP). Acts in the terminal step of the DOXP/MEP pathway for isoprenoid precursor biosynthesis. This Listeria monocytogenes serovar 1/2a (strain ATCC BAA-679 / EGD-e) protein is 4-hydroxy-3-methylbut-2-enyl diphosphate reductase.